Consider the following 229-residue polypeptide: Vitellogenin (229 aa).

The 136-residue stretch at 1–136 folds into the VWFD domain; it reads IVMLKNDNVE…SWILAAESCR (136 aa). Asn-198 is a glycosylation site (N-linked (GlcNAc...) asparagine).

In terms of tissue distribution, expressed in liver, ovary and, to a lesser extent, in muscle, intestine, skin, kidney and heart.

Precursor of the egg-yolk proteins that are sources of nutrients during early development of oviparous organisms. In terms of biological role, probably binds tetrodotoxin in the ovary. The sequence is that of Vitellogenin from Takifugu pardalis (Panther puffer).